Reading from the N-terminus, the 330-residue chain is Putative [LysW]-L-2-aminoadipate/[LysW]-L-glutamate phosphate reductase (330 aa).

Residues 10–13 and 34–36 each bind NADP(+); these read SGYI and SRK. Residue Cys-142 is part of the active site. Asn-297 contributes to the NADP(+) binding site.

This sequence belongs to the NAGSA dehydrogenase family. Type 1 subfamily. LysY sub-subfamily.

It localises to the cytoplasm. It carries out the reaction [amino-group carrier protein]-C-terminal-N-(1-carboxy-5-oxopentan-1-yl)-L-glutamine + phosphate + NADP(+) = [amino-group carrier protein]-C-terminal-N-(1-carboxy-5-phosphooxy-5-oxopentan-1-yl)-L-glutamine + NADPH + H(+). The catalysed reaction is [amino-group carrier protein]-C-terminal-gamma-(L-glutamyl-5-semialdehyde)-L-glutamate + phosphate + NADP(+) = [amino-group carrier protein]-C-terminal-gamma-(5-phospho-L-glutamyl)-L-glutamate + NADPH + H(+). The protein operates within amino-acid biosynthesis; L-lysine biosynthesis via AAA pathway; L-lysine from L-alpha-aminoadipate (Thermus route): step 3/5. It participates in amino-acid biosynthesis; L-arginine biosynthesis. Functionally, involved in both the arginine and lysine biosynthetic pathways. The chain is Putative [LysW]-L-2-aminoadipate/[LysW]-L-glutamate phosphate reductase from Pyrococcus abyssi (strain GE5 / Orsay).